Here is a 214-residue protein sequence, read N- to C-terminus: C-type lectin domain family 4 member E (214 aa).

Residues M1–V22 are Cytoplasmic-facing. Residues L23–V45 form a helical; Signal-anchor for type II membrane protein membrane-spanning segment. At T46–D214 the chain is on the extracellular side. C80 and C91 are oxidised to a cystine. One can recognise a C-type lectin domain in the interval Y87–E206. A glycan (N-linked (GlcNAc...) asparagine) is linked at N107. 2 disulfide bridges follow: C108–C205 and C179–C197. The Ca(2+) site is built by V117, E123, E169, N171, N193, D194, and E206. Residues E169–N171 carry the Confers specificity for glucose/mannose-type carbohydrates motif.

As to quaternary structure, monomer and homodimer. Interacts with signaling adapter Fc receptor gamma chain/FCER1G to form a functional complex; the interaction is direct. Alternatively, acts as a bridge for interaction between CLEC4D and FCER1G. A heterodimer of CLEC4E and CLEC4D associates with FCER1G to form a functional complex. Interacts with SAP130 nuclear protein that is released from necrotic cells; the interaction is direct. Highly expressed in macrophages in response to stimulation with bacterial glycolipids and pro-inflammatory cytokines. Expressed in dendritic cells (at protein level) in response to stimulation with mycobacterial trehalose 6,6'-dimycolate (TDM).

The protein localises to the cell membrane. Its subcellular location is the cell projection. The protein resides in the phagocytic cup. Functionally, calcium-dependent lectin that acts as a pattern recognition receptor (PRR) of the innate immune system: recognizes damage-associated molecular patterns (DAMPs) of abnormal self and pathogen-associated molecular patterns (PAMPs) of bacteria and fungi. The PAMPs notably include mycobacterial trehalose 6,6'-dimycolate (TDM), a cell wall glycolipid with potent adjuvant immunomodulatory functions. Interacts with signaling adapter Fc receptor gamma chain/FCER1G to form a functional complex in myeloid cells. Binding of mycobacterial trehalose 6,6'-dimycolate (TDM) to this receptor complex leads to phosphorylation of the immunoreceptor tyrosine-based activation motif (ITAM) of FCER1G, triggering activation of SYK, CARD9 and NF-kappa-B, consequently driving maturation of antigen-presenting cells and shaping antigen-specific priming of T-cells toward effector T-helper 1 (Th1) and T-helper 17 (Th17) cell subtypes. Also recognizes alpha-mannose residues on pathogenic fungi of the genus Malassezia and mediates macrophage activation. Through recognition of DAMPs released upon nonhomeostatic cell death, enables immune sensing of damaged self and promotes inflammatory cell infiltration into the damaged tissue. The chain is C-type lectin domain family 4 member E from Mus musculus (Mouse).